The sequence spans 828 residues: Beta-galactosidase 13 (828 aa).

A signal peptide spans 1-23; that stretch reads MKTTMAAAATCLVALLVVVLAEA. N-linked (GlcNAc...) asparagine glycosylation is present at N157. The active-site Proton donor is E187. N-linked (GlcNAc...) asparagine glycans are attached at residues N198 and N249. Catalysis depends on E259, which acts as the Nucleophile. N260, N362, N366, N392, N502, N578, N586, and N615 each carry an N-linked (GlcNAc...) asparagine glycan. Residues 746–828 form the SUEL-type lectin domain; sequence AEVGDAITLS…SGVLTVQASC (83 aa).

The protein belongs to the glycosyl hydrolase 35 family.

The protein resides in the secreted. The protein localises to the extracellular space. It is found in the apoplast. It carries out the reaction Hydrolysis of terminal non-reducing beta-D-galactose residues in beta-D-galactosides.. This is Beta-galactosidase 13 from Oryza sativa subsp. japonica (Rice).